The following is a 366-amino-acid chain: Acetylserotonin O-methyltransferase 3 (366 aa).

S-adenosyl-L-homocysteine contacts are provided by Gly209, Asp232, Asp253, and Lys267. His271 functions as the Proton acceptor in the catalytic mechanism. Residues Glu302 and Glu332 contribute to the active site.

It belongs to the class I-like SAM-binding methyltransferase superfamily. Cation-independent O-methyltransferase family. As to quaternary structure, homodimer. As to expression, expressed at low levels in roots, shoots, leaves, stems and flowers.

The protein localises to the cytoplasm. It catalyses the reaction N-acetylserotonin + S-adenosyl-L-methionine = melatonin + S-adenosyl-L-homocysteine + H(+). It participates in aromatic compound metabolism; melatonin biosynthesis; melatonin from serotonin: step 1/2. Functionally, methyltransferase which catalyzes the transfer of a methyl group onto N-acetylserotonin, producing melatonin (N-acetyl-5-methoxytryptamine). In Oryza sativa subsp. japonica (Rice), this protein is Acetylserotonin O-methyltransferase 3.